A 180-amino-acid chain; its full sequence is Large ribosomal subunit protein uL5 (180 aa).

Belongs to the universal ribosomal protein uL5 family. As to quaternary structure, part of the 50S ribosomal subunit; part of the 5S rRNA/L5/L18/L25 subcomplex. Contacts the 5S rRNA and the P site tRNA. Forms a bridge to the 30S subunit in the 70S ribosome.

This is one of the proteins that bind and probably mediate the attachment of the 5S RNA into the large ribosomal subunit, where it forms part of the central protuberance. In the 70S ribosome it contacts protein S13 of the 30S subunit (bridge B1b), connecting the 2 subunits; this bridge is implicated in subunit movement. Contacts the P site tRNA; the 5S rRNA and some of its associated proteins might help stabilize positioning of ribosome-bound tRNAs. The chain is Large ribosomal subunit protein uL5 from Chlamydia felis (strain Fe/C-56) (Chlamydophila felis).